The sequence spans 364 residues: Growth hormone secretagogue receptor type 1 (364 aa).

Residues 1–40 (MWNATPSEEPEPNVTLDLDWDASPGNDSLPDELLPLFPAP) are Extracellular-facing. 2 N-linked (GlcNAc...) asparagine glycosylation sites follow: N13 and N26. Residues 41 to 66 (LLAGVTATCVALFVVGISGNLLTMLV) traverse the membrane as a helical segment. Over 67–72 (VSRFRE) the chain is Cytoplasmic. A helical membrane pass occupies residues 73 to 96 (LRTTTNLYLSSMAFSDLLIFLCMP). The Extracellular portion of the chain corresponds to 97–117 (LDLVRLWQYRPWNFGDLLCKL). C115 and C197 are oxidised to a cystine. The chain crosses the membrane as a helical span at residues 118–139 (FQFVSESCTYATVLTITALSVE). The Cytoplasmic portion of the chain corresponds to 140 to 162 (RYFAICFPLRAKVVVTKGRVKLV). Residues 163–183 (ILVIWAVAFCSAGPIFVLVGV) traverse the membrane as a helical segment. The Extracellular portion of the chain corresponds to 184 to 211 (EHENGTDPRDTNECRATEFAVRSGLLTV). N187 carries an N-linked (GlcNAc...) asparagine glycan. The chain crosses the membrane as a helical span at residues 212 to 235 (MVWVSSVFFFLPVFCLTVLYSLIG). Residues 236–263 (RKLWRRRGDAAVGASLRDQNHKQTVKML) lie on the Cytoplasmic side of the membrane. The helical transmembrane segment at 264 to 285 (AVVVFAFILCWLPFHVGRYLFS) threads the bilayer. The Extracellular portion of the chain corresponds to 286-302 (KSFEPGSLEIAQISQYC). The helical transmembrane segment at 303-326 (NLVSFVLFYLSAAINPILYNIMSK) threads the bilayer. Residues 327–364 (KYRVAVFKLLGFESFSQRKLSTLKDESSRAWTKSSINT) lie on the Cytoplasmic side of the membrane.

The protein belongs to the G-protein coupled receptor 1 family.

It localises to the cell membrane. Its function is as follows. Receptor for ghrelin, coupled to G-alpha-11 proteins. Stimulates growth hormone secretion. Also binds other growth hormone releasing peptides (GHRP) (e.g. Met-enkephalin and GHRP-6) as well as non-peptide, low molecular weight secretagogues (e.g. L-692,429, MK-0677, adenosine). This is Growth hormone secretagogue receptor type 1 (Ghsr) from Rattus norvegicus (Rat).